The primary structure comprises 366 residues: A-type ATP synthase subunit C (366 aa).

This sequence belongs to the V-ATPase V0D/AC39 subunit family. As to quaternary structure, has multiple subunits with at least A(3), B(3), C, D, E, F, H, I and proteolipid K(x).

Its subcellular location is the cell membrane. Its function is as follows. Component of the A-type ATP synthase that produces ATP from ADP in the presence of a proton gradient across the membrane. This Thermococcus onnurineus (strain NA1) protein is A-type ATP synthase subunit C.